We begin with the raw amino-acid sequence, 662 residues long: UPF0313 protein CPR_1216 (662 aa).

The Radical SAM core domain maps to 296-567; that stretch reads AIEEVKFSLV…AMQRALLQFK (272 aa). The [4Fe-4S] cluster site is built by Cys-310, Cys-314, and Cys-317. The disordered stretch occupies residues 597-662; that stretch reads RDKNSFGKGN…QRVSKGKKRR (66 aa). Positions 618 to 632 are enriched in basic and acidic residues; that stretch reads SRNENSGRRESEDKK. The span at 633-644 shows a compositional bias: basic residues; the sequence is RSSHSKKQRGNK.

The protein belongs to the UPF0313 family. [4Fe-4S] cluster serves as cofactor.

The sequence is that of UPF0313 protein CPR_1216 from Clostridium perfringens (strain SM101 / Type A).